Reading from the N-terminus, the 486-residue chain is Serine/threonine-protein phosphatase 2A 56 kDa regulatory subunit alpha isoform (486 aa).

Over residues 1–18 (MSSSSPPAGAASAAISAS) the composition is skewed to low complexity. Residues 1 to 52 (MSSSSPPAGAASAAISASEKVDGFTRKSVRKAQRQKRSQGSSQFRSQGSQAE) are disordered. An N-acetylserine modification is found at Ser-2. Residues 27-37 (KSVRKAQRQKR) are compositionally biased toward basic residues. The span at 38–51 (SQGSSQFRSQGSQA) shows a compositional bias: low complexity. A phosphoserine mark is found at Ser-41, Ser-42, and Ser-49.

This sequence belongs to the phosphatase 2A regulatory subunit B56 family. In terms of assembly, PP2A consists of a common heterodimeric core enzyme, composed of a 36 kDa catalytic subunit (subunit C) and a 65 kDa constant regulatory subunit (PR65 or subunit A), that associates with a variety of regulatory subunits. Proteins that associate with the core dimer include three families of regulatory subunits B (the R2/B/PR55/B55, R3/B''/PR72/PR130/PR59 and R5/B'/B56 families), the 48 kDa variable regulatory subunit, viral proteins, and cell signaling molecules. Interacts with SGO1. Phosphorylated on serine residues. Widely expressed with the highest expression in heart and skeletal muscle.

The protein localises to the cytoplasm. Its subcellular location is the nucleus. It is found in the chromosome. It localises to the centromere. Its function is as follows. The B regulatory subunit might modulate substrate selectivity and catalytic activity, and might also direct the localization of the catalytic enzyme to a particular subcellular compartment. The protein is Serine/threonine-protein phosphatase 2A 56 kDa regulatory subunit alpha isoform (PPP2R5A) of Homo sapiens (Human).